The chain runs to 352 residues: NADP-dependent oxidoreductase RED1 (352 aa).

NADP(+)-binding positions include 166-169, lysine 192, tyrosine 208, asparagine 231, and 285-287; these read GAVG and FIV.

Belongs to the NADP-dependent oxidoreductase L4BD family.

The protein operates within mycotoxin biosynthesis. Functionally, NADP-dependent oxidoreductase; part of the Tox1B locus, one of the 2 loci that mediate the biosynthesis of T-toxin, a family of linear polyketides 37 to 45 carbons in length, of which the major component is 41 carbons, and which leads to high virulence to maize. One of the PKSs (PKS1 or PKS2) could synthesize a precursor, used subsequently by the other PKS as starter unit, to add additional carbons. Variability in the length of the final carbon backbone C35-47 could be achieved by varying the number of condensation cycles, or use of different starter or extender units or might be due to decarboxylation of the penultimate product, catalyzed by DEC1. Additional proteins are required for the biosynthesis of T-toxin, including oxidoreductases RED1, RED2, RED3, LAM1 and OXI1, as well as esterase TOX9. The polypeptide is NADP-dependent oxidoreductase RED1 (Cochliobolus heterostrophus (strain C4 / ATCC 48331 / race T) (Southern corn leaf blight fungus)).